Reading from the N-terminus, the 51-residue chain is Insulin (51 aa).

3 cysteine pairs are disulfide-bonded: Cys7-Cys36, Cys19-Cys49, and Cys35-Cys40.

The protein belongs to the insulin family. Heterodimer of a B chain and an A chain linked by two disulfide bonds.

The protein localises to the secreted. Functionally, insulin decreases blood glucose concentration. It increases cell permeability to monosaccharides, amino acids and fatty acids. It accelerates glycolysis, the pentose phosphate cycle, and glycogen synthesis in liver. The polypeptide is Insulin (INS) (Myocastor coypus (Coypu)).